The following is a 405-amino-acid chain: 8-amino-7-oxononanoate synthase 2 (405 aa).

R20 contacts substrate. Pyridoxal 5'-phosphate is bound at residue 116-117 (GY). H141 lines the substrate pocket. Residues S187, H215, and T243 each contribute to the pyridoxal 5'-phosphate site. Residue K246 is modified to N6-(pyridoxal phosphate)lysine. Residue T369 participates in substrate binding.

Belongs to the class-II pyridoxal-phosphate-dependent aminotransferase family. BioF subfamily. As to quaternary structure, homodimer. Pyridoxal 5'-phosphate serves as cofactor.

It carries out the reaction 6-carboxyhexanoyl-[ACP] + L-alanine + H(+) = (8S)-8-amino-7-oxononanoate + holo-[ACP] + CO2. Its pathway is cofactor biosynthesis; biotin biosynthesis. Catalyzes the decarboxylative condensation of pimeloyl-[acyl-carrier protein] and L-alanine to produce 8-amino-7-oxononanoate (AON), [acyl-carrier protein], and carbon dioxide. The protein is 8-amino-7-oxononanoate synthase 2 of Polaromonas sp. (strain JS666 / ATCC BAA-500).